A 356-amino-acid polypeptide reads, in one-letter code: Dihydroorotate dehydrogenase (quinone) (356 aa).

FMN-binding positions include 66 to 70 and T90; that span reads AGFDK. K70 contributes to the substrate binding site. Substrate is bound at residue 115–119; that stretch reads NRMGF. Residues N143 and N176 each contribute to the FMN site. Residue N176 coordinates substrate. S179 (nucleophile) is an active-site residue. Position 181 (N181) interacts with substrate. Residues K212 and T240 each coordinate FMN. 241–242 serves as a coordination point for substrate; sequence NT. FMN contacts are provided by residues G266, G295, and 316–317; that span reads YT.

It belongs to the dihydroorotate dehydrogenase family. Type 2 subfamily. In terms of assembly, monomer. Requires FMN as cofactor.

It is found in the cell membrane. It carries out the reaction (S)-dihydroorotate + a quinone = orotate + a quinol. Its pathway is pyrimidine metabolism; UMP biosynthesis via de novo pathway; orotate from (S)-dihydroorotate (quinone route): step 1/1. Catalyzes the conversion of dihydroorotate to orotate with quinone as electron acceptor. The sequence is that of Dihydroorotate dehydrogenase (quinone) from Rhodococcus opacus (strain B4).